We begin with the raw amino-acid sequence, 205 residues long: Thiamine-phosphate synthase (205 aa).

4-amino-2-methyl-5-(diphosphooxymethyl)pyrimidine is bound by residues 34–38 (QLRCK) and Asn-66. Residues Asp-67 and Asp-86 each coordinate Mg(2+). Ser-105 contributes to the 4-amino-2-methyl-5-(diphosphooxymethyl)pyrimidine binding site. 131–133 (TTT) contacts 2-[(2R,5Z)-2-carboxy-4-methylthiazol-5(2H)-ylidene]ethyl phosphate. Lys-134 is a binding site for 4-amino-2-methyl-5-(diphosphooxymethyl)pyrimidine. Gly-163 contacts 2-[(2R,5Z)-2-carboxy-4-methylthiazol-5(2H)-ylidene]ethyl phosphate.

The protein belongs to the thiamine-phosphate synthase family. Mg(2+) serves as cofactor.

It carries out the reaction 2-[(2R,5Z)-2-carboxy-4-methylthiazol-5(2H)-ylidene]ethyl phosphate + 4-amino-2-methyl-5-(diphosphooxymethyl)pyrimidine + 2 H(+) = thiamine phosphate + CO2 + diphosphate. It catalyses the reaction 2-(2-carboxy-4-methylthiazol-5-yl)ethyl phosphate + 4-amino-2-methyl-5-(diphosphooxymethyl)pyrimidine + 2 H(+) = thiamine phosphate + CO2 + diphosphate. The catalysed reaction is 4-methyl-5-(2-phosphooxyethyl)-thiazole + 4-amino-2-methyl-5-(diphosphooxymethyl)pyrimidine + H(+) = thiamine phosphate + diphosphate. Its pathway is cofactor biosynthesis; thiamine diphosphate biosynthesis; thiamine phosphate from 4-amino-2-methyl-5-diphosphomethylpyrimidine and 4-methyl-5-(2-phosphoethyl)-thiazole: step 1/1. Functionally, condenses 4-methyl-5-(beta-hydroxyethyl)thiazole monophosphate (THZ-P) and 2-methyl-4-amino-5-hydroxymethyl pyrimidine pyrophosphate (HMP-PP) to form thiamine monophosphate (TMP). This is Thiamine-phosphate synthase from Neisseria meningitidis serogroup A / serotype 4A (strain DSM 15465 / Z2491).